A 255-amino-acid chain; its full sequence is Lactose phosphotransferase system repressor (255 aa).

The region spanning 3–58 is the HTH deoR-type domain; the sequence is KKRRLEKILDMLKIDGTITIKEIIDELDISDMTARRDLDALEADGLLTRTHGGAQL. Residues 20-39 constitute a DNA-binding region (H-T-H motif); that stretch reads ITIKEIIDELDISDMTARRD.

Functionally, repressor of the lactose catabolism operon. Galactose-6-phosphate is the inducer. This Lactococcus lactis subsp. lactis (Streptococcus lactis) protein is Lactose phosphotransferase system repressor (lacR).